The chain runs to 637 residues: Threonine--tRNA ligase (637 aa).

The 61-residue stretch at Met-1–Thr-61 folds into the TGS domain. The interval Asp-242 to Pro-533 is catalytic. Zn(2+)-binding residues include Cys-333, His-384, and His-510.

This sequence belongs to the class-II aminoacyl-tRNA synthetase family. In terms of assembly, homodimer. The cofactor is Zn(2+).

Its subcellular location is the cytoplasm. The enzyme catalyses tRNA(Thr) + L-threonine + ATP = L-threonyl-tRNA(Thr) + AMP + diphosphate + H(+). Catalyzes the attachment of threonine to tRNA(Thr) in a two-step reaction: L-threonine is first activated by ATP to form Thr-AMP and then transferred to the acceptor end of tRNA(Thr). Also edits incorrectly charged L-seryl-tRNA(Thr). The sequence is that of Threonine--tRNA ligase from Teredinibacter turnerae (strain ATCC 39867 / T7901).